Here is a 139-residue protein sequence, read N- to C-terminus: Small ribosomal subunit protein uS11 (139 aa).

A disordered region spans residues 118–139 (EDVTPIPHDGTRPKGGRRGRRV).

The protein belongs to the universal ribosomal protein uS11 family. As to quaternary structure, part of the 30S ribosomal subunit.

Located on the platform of the 30S subunit. The sequence is that of Small ribosomal subunit protein uS11 from Thermococcus sibiricus (strain DSM 12597 / MM 739).